Consider the following 84-residue polypeptide: Anaphase-promoting complex subunit 11 (84 aa).

The Zn(2+) site is built by C23, C26, C34, C37, C44, C51, H53, H56, H58, C59, C73, and C76. The segment at 34-77 (CPDCKVPGDDCPLVWGQCSHCFHMHCILKWLNAQQVQQHCPMCR) adopts an RING-type zinc-finger fold.

Belongs to the RING-box family. As to quaternary structure, the mammalian APC/C is composed at least of 14 distinct subunits ANAPC1, ANAPC2, CDC27/APC3, ANAPC4, ANAPC5, CDC16/APC6, ANAPC7, CDC23/APC8, ANAPC10, ANAPC11, CDC26/APC12, ANAPC13, ANAPC15 and ANAPC16 that assemble into a complex of at least 19 chains with a combined molecular mass of around 1.2 MDa; APC/C interacts with FZR1 and FBXO5. Interacts with the cullin domain of ANAPC2. Interacts with UBE2D2. Auto-ubiquitinated.

The protein localises to the cytoplasm. The protein resides in the nucleus. It participates in protein modification; protein ubiquitination. In terms of biological role, together with the cullin protein ANAPC2, constitutes the catalytic component of the anaphase promoting complex/cyclosome (APC/C), a cell cycle-regulated E3 ubiquitin ligase that controls progression through mitosis and the G1 phase of the cell cycle. The APC/C complex acts by mediating ubiquitination and subsequent degradation of target proteins: it mainly mediates the formation of 'Lys-11'-linked polyubiquitin chains and, to a lower extent, the formation of 'Lys-48'- and 'Lys-63'-linked polyubiquitin chains. The APC/C complex catalyzes assembly of branched 'Lys-11'-/'Lys-48'-linked branched ubiquitin chains on target proteins. May recruit the E2 ubiquitin-conjugating enzymes to the complex. The protein is Anaphase-promoting complex subunit 11 (Anapc11) of Mus musculus (Mouse).